The primary structure comprises 582 residues: DNA mismatch repair protein MutL (582 aa).

This sequence belongs to the DNA mismatch repair MutL/HexB family.

This protein is involved in the repair of mismatches in DNA. It is required for dam-dependent methyl-directed DNA mismatch repair. May act as a 'molecular matchmaker', a protein that promotes the formation of a stable complex between two or more DNA-binding proteins in an ATP-dependent manner without itself being part of a final effector complex. The protein is DNA mismatch repair protein MutL of Buchnera aphidicola subsp. Schizaphis graminum (strain Sg).